The chain runs to 372 residues: 3-dehydroquinate synthase (372 aa).

NAD(+)-binding positions include glycine 113–aspartate 117, threonine 137–serine 138, lysine 150, lysine 159, and threonine 177–threonine 180. Zn(2+)-binding residues include glutamate 192, histidine 257, and histidine 274.

It belongs to the sugar phosphate cyclases superfamily. Dehydroquinate synthase family. It depends on Co(2+) as a cofactor. Zn(2+) is required as a cofactor. NAD(+) serves as cofactor.

It is found in the cytoplasm. It carries out the reaction 7-phospho-2-dehydro-3-deoxy-D-arabino-heptonate = 3-dehydroquinate + phosphate. It participates in metabolic intermediate biosynthesis; chorismate biosynthesis; chorismate from D-erythrose 4-phosphate and phosphoenolpyruvate: step 2/7. Its function is as follows. Catalyzes the conversion of 3-deoxy-D-arabino-heptulosonate 7-phosphate (DAHP) to dehydroquinate (DHQ). The sequence is that of 3-dehydroquinate synthase from Acaryochloris marina (strain MBIC 11017).